Consider the following 265-residue polypeptide: Putative cysteine-rich receptor-like protein kinase 9 (265 aa).

The first 23 residues, 1 to 23, serve as a signal peptide directing secretion; it reads MSSLISFIFLFLFSFLTSFKASA. Gnk2-homologous domains are found at residues 27-131 and 142-244; these read FYLN…DKNI and FILS…LYSF. 6 N-linked (GlcNAc...) asparagine glycosylation sites follow: asparagine 35, asparagine 60, asparagine 69, asparagine 153, asparagine 177, and asparagine 246.

Belongs to the protein kinase superfamily. Ser/Thr protein kinase family. CRK subfamily.

The protein localises to the secreted. This is Putative cysteine-rich receptor-like protein kinase 9 (CRK9) from Arabidopsis thaliana (Mouse-ear cress).